A 501-amino-acid polypeptide reads, in one-letter code: MEKKKKPELSRRDFGKLIIGGGAAATIAPFGVPGANAAEKEKNAAEIRQQFAMTAGSPIIVNDKLERYAEVRTAFTHPTSFFKPNYKGEVKPWFLSAYDEKVRQIENGENGPKMKAKNVGEARAGRALEAAGWTLDINYGNIYPNRFFMLWSGETMTNTQLWAPVGLDRRPPDTTDPVELTNYVKFAARMAGADLVGVARLNRNWVYSEAVTIPADVPYEQSLHKEIEKPIVFKDVPLPIETDDELIIPNTCENVIVAGIAMNREMMQTAPNSMACATTAFCYSRMCMFDMWLCQFIRYMGYYAIPSCNGVGQSVAFAVEAGLGQASRMGACITPEFGPNVRLTKVFTNMPLVPDKPIDFGVTEFCETCKKCARECPSKAITEGPRTFEGRSIHNQSGKLQWQNDYNKCLGYWPESGGYCGVCVAVCPFTKGNIWIHDGVEWLIDNTRFLDPLMLGMDDALGYGAKRNITEVWDGKINTYGLDADHFRDTVSFRKDRVKKS.

Residues 1–37 (MEKKKKPELSRRDFGKLIIGGGAAATIAPFGVPGANA) constitute a signal peptide (tat-type signal). Residues Ala74, Tyr207, 309-314 (NGVGQS), 329-332 (MGAC), and 341-343 (VRL) contribute to the corrinoid site. The 4Fe-4S ferredoxin-type 1 domain occupies 356–386 (KPIDFGVTEFCETCKKCARECPSKAITEGPR). Cys366, Cys369, Cys372, and Cys376 together coordinate [4Fe-4S] cluster. 394–401 (HNQSGKLQ) is a binding site for corrinoid. Residue Cys409 participates in [4Fe-4S] cluster binding. Position 419 (Tyr419) interacts with corrinoid. Residues Cys420, Cys423, and Cys427 each contribute to the [4Fe-4S] cluster site. The region spanning 420–439 (CGVCVAVCPFTKGNIWIHDG) is the 4Fe-4S ferredoxin-type 2 domain.

Belongs to the PceA family. As to quaternary structure, monomer. The cofactor is [4Fe-4S] cluster. Requires corrinoid as cofactor. Predicted to be exported by the Tat system. The position of the signal peptide cleavage has not been experimentally proven.

The protein localises to the cytoplasm. It localises to the cell inner membrane. The catalysed reaction is trichloroethene + chloride + A + H(+) = tetrachloroethene + AH2. It carries out the reaction trichloroethene + AH2 = (Z)-1,2-dichloroethene + chloride + A + H(+). Its activity is regulated as follows. Both the processed and unprocessed enzymes are catalytically active. PCE-dependent growth and PceA activity are inhibited in the presence of high concentrations of 5,6-dimethylbenzimidazole (DMB), probably due to the formation a DMB-containing nor-B12 cofactor. Dechlorination of PCE is stimulated by ammonium ions. Activity is inhibited by chlorinated methanes. In terms of biological role, catalyzes the reductive dechlorination of tetrachloroethene (PCE) to trichloroethene (TCE) and of trichloroethene to cis-1,2-dichloroethene (DCE). In addition, trans-1,3-dichloropropene, 1,1,3-trichloropropene and 2,3-dichloropropene are reduced to a mixture of mono-chloropropenes, 1,1-dichloropropene, and 2-chloropropene, respectively. Is also able to convert brominated phenols such as 4-bromophenol (4-BP), 2,4-dibromophenol (2,4-DBP) and 2,4,6-tribromophenol (2,4,6-TBP). Utilizes formate or pyruvate as electron donors. Titanium(III) citrate could also serve as electron donor. Reduced methyl viologen can act as the artificial electron donor. The protein is Tetrachloroethene reductive dehalogenase of Sulfurospirillum multivorans (Dehalospirillum multivorans).